The chain runs to 468 residues: UDP-N-acetylmuramate--L-alanine ligase (468 aa).

112–118 (GTHGKTT) is a binding site for ATP.

The protein belongs to the MurCDEF family.

It is found in the cytoplasm. The enzyme catalyses UDP-N-acetyl-alpha-D-muramate + L-alanine + ATP = UDP-N-acetyl-alpha-D-muramoyl-L-alanine + ADP + phosphate + H(+). It participates in cell wall biogenesis; peptidoglycan biosynthesis. Its function is as follows. Cell wall formation. The protein is UDP-N-acetylmuramate--L-alanine ligase of Bordetella petrii (strain ATCC BAA-461 / DSM 12804 / CCUG 43448).